Reading from the N-terminus, the 189-residue chain is dCTP deaminase (189 aa).

DCTP contacts are provided by residues 112–117, 136–138, glutamine 157, tyrosine 171, and glutamine 181; these read KSTYAR and TLE. Glutamate 138 (proton donor/acceptor) is an active-site residue.

This sequence belongs to the dCTP deaminase family. As to quaternary structure, homotrimer.

It carries out the reaction dCTP + H2O + H(+) = dUTP + NH4(+). The protein operates within pyrimidine metabolism; dUMP biosynthesis; dUMP from dCTP (dUTP route): step 1/2. Catalyzes the deamination of dCTP to dUTP. The sequence is that of dCTP deaminase from Teredinibacter turnerae (strain ATCC 39867 / T7901).